The sequence spans 603 residues: MTDVPAVRIRNFCIIAHIDHGKSTLADRLLQATGTVDERQMKEQFLDNMDLERERGITIKLQAARMNYQAKDGQQYVLNLIDTPGHVDFSYEVSRSLAACEGALLVVDASQGVEAQTLANVYLALEHNLEIIPVLNKIDLPGAEPDRVVGEIEEIIGLDCSGAILASAKEGIGINEILEAVVERVPPPPNTVDQRLRALIFDSYYDIYRGVIVYFRVMDGTVKKGDRVYLMASEKEYEIDELGVLSPTQKPVNELHAGEVGYFGAAIKAVADARVGDTITLCNAKATEALPGYTEANPMVFCGMFPIDADQFEDLREALEKLRLNDAALQYEPETSSAMGFGFRCGFLGLLHMEIVQERLEREYDLDLIITAPSVVYKVITTKGEELYIDNPSHLPAPNDRERIEEPYVKVEMITPETYVGTLMELSQNRRGIFKDMKYLTQGRTTLTYEIPLAEVVTDFFDQMKSRSRGYASMEYHLIGYRENPLVKLDIMINGDPVDSLAMIVHRDKAYGMGRSMAEKLKELIPRHQFKVPIQASIGSKVIASEHIPALRKDVLAKCYGGDISRKKKLLQKQAKGKKRMKSVGTVDVPQEAFMAVLRLDQS.

The 183-residue stretch at 7–189 folds into the tr-type G domain; sequence VRIRNFCIIA…AVVERVPPPP (183 aa). GTP is bound by residues 19 to 24 and 136 to 139; these read DHGKST and NKID.

It belongs to the TRAFAC class translation factor GTPase superfamily. Classic translation factor GTPase family. LepA subfamily.

It localises to the cell inner membrane. The enzyme catalyses GTP + H2O = GDP + phosphate + H(+). Functionally, required for accurate and efficient protein synthesis under certain stress conditions. May act as a fidelity factor of the translation reaction, by catalyzing a one-codon backward translocation of tRNAs on improperly translocated ribosomes. Back-translocation proceeds from a post-translocation (POST) complex to a pre-translocation (PRE) complex, thus giving elongation factor G a second chance to translocate the tRNAs correctly. Binds to ribosomes in a GTP-dependent manner. The chain is Elongation factor 4 from Nostoc sp. (strain PCC 7120 / SAG 25.82 / UTEX 2576).